The following is a 493-amino-acid chain: Glutamyl-tRNA(Gln) amidotransferase subunit A (493 aa).

Active-site charge relay system residues include K78 and S158. The active-site Acyl-ester intermediate is S182.

This sequence belongs to the amidase family. GatA subfamily. Heterotrimer of A, B and C subunits.

The enzyme catalyses L-glutamyl-tRNA(Gln) + L-glutamine + ATP + H2O = L-glutaminyl-tRNA(Gln) + L-glutamate + ADP + phosphate + H(+). Functionally, allows the formation of correctly charged Gln-tRNA(Gln) through the transamidation of misacylated Glu-tRNA(Gln) in organisms which lack glutaminyl-tRNA synthetase. The reaction takes place in the presence of glutamine and ATP through an activated gamma-phospho-Glu-tRNA(Gln). This is Glutamyl-tRNA(Gln) amidotransferase subunit A from Methylorubrum populi (strain ATCC BAA-705 / NCIMB 13946 / BJ001) (Methylobacterium populi).